Consider the following 832-residue polypeptide: Dolichyl-phosphate-mannose--protein mannosyltransferase 6 (832 aa).

The segment at 1-44 (MATGYSTGVSPFDLDENNHNDSIHHRHQNHHSQSHDSSGERDDT) is disordered. N-linked (GlcNAc...) asparagine glycans are attached at residues N20 and N59. 7 helical membrane passes run 135-155 (FYFDVHPPLGKLLIGLSGYLA), 175-194 (YVFMRIFNCFFGILVTPLAY), 206-227 (TCWLIAFMVIFEQLSLTLSKFI), 232-252 (MLLFFTVLTMYCLVKVHTLAI), 266-286 (LEIKWYILTGISIGCVCSVKW), 293-311 (ALVGFYTIVDLWIKFYQTF), and 327-347 (LIHWVVRIFTLIIIPMTIYVA). N357 carries an N-linked (GlcNAc...) asparagine glycan. Residues 383–437 (PRSVAFGSLVTIRSQGLSPNLIHSHPHNYPQGSQEQQVTTYGFKDDNNEFLFEFG) enclose the MIR 1 domain. N453 is a glycosylation site (N-linked (GlcNAc...) asparagine). MIR domains lie at 466–522 (HVII…IEIQ) and 537–595 (PSEI…IEKH). 4 helical membrane passes run 676-696 (ITWISTIALIVCPLYLLVVGI), 723-743 (LLAARALLPLAGWVLHYVPFI), 755-775 (VPALYFAIFVAGFIVDAILNL), and 787-807 (IFKVVIYSTLYLVICISFWYF).

The protein belongs to the glycosyltransferase 39 family.

The protein localises to the endoplasmic reticulum membrane. The catalysed reaction is a di-trans,poly-cis-dolichyl beta-D-mannosyl phosphate + L-seryl-[protein] = 3-O-(alpha-D-mannosyl)-L-seryl-[protein] + a di-trans,poly-cis-dolichyl phosphate + H(+). It carries out the reaction a di-trans,poly-cis-dolichyl beta-D-mannosyl phosphate + L-threonyl-[protein] = 3-O-(alpha-D-mannosyl)-L-threonyl-[protein] + a di-trans,poly-cis-dolichyl phosphate + H(+). It functions in the pathway protein modification; protein glycosylation. Protein mannosyltransferase (PMT) involved in hyphal morphogenesis and drug sensitivity. Transfers mannose from Dol-P-mannose to Ser or Thr residues on proteins. PMT1, PMT2 and PMT4 account for most of the protein-O-glycosylation activity, while PMT5 and PMT6 may specifically modulate a much narrower spectrum of target proteins. Required for biofilm formation and virulence. The chain is Dolichyl-phosphate-mannose--protein mannosyltransferase 6 (PMT6) from Candida albicans (strain SC5314 / ATCC MYA-2876) (Yeast).